The primary structure comprises 427 residues: Enolase (427 aa).

Position 163 (Gln163) interacts with (2R)-2-phosphoglycerate. Glu205 (proton donor) is an active-site residue. Mg(2+)-binding residues include Asp242, Glu285, and Asp312. 4 residues coordinate (2R)-2-phosphoglycerate: Lys337, Arg366, Ser367, and Lys388. The active-site Proton acceptor is Lys337.

It belongs to the enolase family. Requires Mg(2+) as cofactor.

It localises to the cytoplasm. It is found in the secreted. Its subcellular location is the cell surface. The catalysed reaction is (2R)-2-phosphoglycerate = phosphoenolpyruvate + H2O. Its pathway is carbohydrate degradation; glycolysis; pyruvate from D-glyceraldehyde 3-phosphate: step 4/5. Its function is as follows. Catalyzes the reversible conversion of 2-phosphoglycerate (2-PG) into phosphoenolpyruvate (PEP). It is essential for the degradation of carbohydrates via glycolysis. This is Enolase from Nitrosospira multiformis (strain ATCC 25196 / NCIMB 11849 / C 71).